Consider the following 178-residue polypeptide: CASP-like protein 5B1 (178 aa).

Over 1-37 (MDASNPIVHPIGDHHAVDLEEGPLIVTMKELPGMPGT) the chain is Cytoplasmic. The chain crosses the membrane as a helical span at residues 38 to 58 (IGGLALRVGQFLFAAAAIVIM). Residues 59–69 (VTGDEFTNYTA) are Extracellular-facing. A glycan (N-linked (GlcNAc...) asparagine) is linked at N66. The chain crosses the membrane as a helical span at residues 70 to 90 (FCYLVAAMSLQFLWSFMLAIL). At 91–104 (DTYALLIKRGLRNS) the chain is on the cytoplasmic side. The chain crosses the membrane as a helical span at residues 105 to 125 (VLLSLFVVGDWVTATLSLAAA). The Extracellular portion of the chain corresponds to 126–154 (CSTAGVTVLFDNDLNYCGQMHCHRYQLSA). The helical transmembrane segment at 155 to 175 (AMAFLSWLLIGMSSLLTFWLW) threads the bilayer. Topologically, residues 176 to 178 (ASE) are cytoplasmic.

Belongs to the Casparian strip membrane proteins (CASP) family. In terms of assembly, homodimer and heterodimers.

The protein localises to the cell membrane. The protein is CASP-like protein 5B1 of Ginkgo biloba (Ginkgo).